A 729-amino-acid chain; its full sequence is Polyribonucleotide nucleotidyltransferase (729 aa).

Residues Asp485 and Asp491 each coordinate Mg(2+). One can recognise a KH domain in the interval 552–611; the sequence is PRITTMKVAEDKIRTIIGKGGATIKGLIESTGVSIDIDDSGVIQLFSPDKMALEEAQKQI. One can recognise an S1 motif domain in the interval 621 to 689; it reads GQTYQGKVSK…KQGRVKLEWK (69 aa). The disordered stretch occupies residues 710-729; it reads TMEEQSEEINSGNKISEEEE.

The protein belongs to the polyribonucleotide nucleotidyltransferase family. Component of the RNA degradosome, which is a multiprotein complex involved in RNA processing and mRNA degradation. It depends on Mg(2+) as a cofactor.

The protein resides in the cytoplasm. It catalyses the reaction RNA(n+1) + phosphate = RNA(n) + a ribonucleoside 5'-diphosphate. Involved in mRNA degradation. Catalyzes the phosphorolysis of single-stranded polyribonucleotides processively in the 3'- to 5'-direction. The chain is Polyribonucleotide nucleotidyltransferase from Legionella pneumophila (strain Paris).